The chain runs to 248 residues: Meiotically up-regulated gene 110 protein (248 aa).

The chain crosses the membrane as a helical span at residues 23 to 43; the sequence is LRFVFWFSVLIPIFFIALIII.

It is found in the membrane. In terms of biological role, has a role in meiosis. This is Meiotically up-regulated gene 110 protein (mug110) from Schizosaccharomyces pombe (strain 972 / ATCC 24843) (Fission yeast).